A 119-amino-acid chain; its full sequence is Ribonuclease P protein component (119 aa).

The protein belongs to the RnpA family. In terms of assembly, consists of a catalytic RNA component (M1 or rnpB) and a protein subunit.

It catalyses the reaction Endonucleolytic cleavage of RNA, removing 5'-extranucleotides from tRNA precursor.. Functionally, RNaseP catalyzes the removal of the 5'-leader sequence from pre-tRNA to produce the mature 5'-terminus. It can also cleave other RNA substrates such as 4.5S RNA. The protein component plays an auxiliary but essential role in vivo by binding to the 5'-leader sequence and broadening the substrate specificity of the ribozyme. This is Ribonuclease P protein component from Borreliella burgdorferi (strain ZS7) (Borrelia burgdorferi).